The following is a 574-amino-acid chain: Sulfite reductase [NADPH] hemoprotein beta-component (574 aa).

The [4Fe-4S] cluster site is built by Cys-439, Cys-445, Cys-484, and Cys-488. Cys-488 contacts siroheme.

Belongs to the nitrite and sulfite reductase 4Fe-4S domain family. Alpha(8)-beta(8). The alpha component is a flavoprotein, the beta component is a hemoprotein. Siroheme serves as cofactor. Requires [4Fe-4S] cluster as cofactor.

The catalysed reaction is hydrogen sulfide + 3 NADP(+) + 3 H2O = sulfite + 3 NADPH + 4 H(+). Its pathway is sulfur metabolism; hydrogen sulfide biosynthesis; hydrogen sulfide from sulfite (NADPH route): step 1/1. Component of the sulfite reductase complex that catalyzes the 6-electron reduction of sulfite to sulfide. This is one of several activities required for the biosynthesis of L-cysteine from sulfate. The chain is Sulfite reductase [NADPH] hemoprotein beta-component from Paenibacillus sp. (strain JDR-2).